We begin with the raw amino-acid sequence, 254 residues long: HTH-type transcriptional repressor DasR (254 aa).

The region spanning 17–87 is the HTH gntR-type domain; that stretch reads RTARVPKYYR…QGKGTFVAKP (71 aa). The segment at residues 47 to 66 is a DNA-binding region (H-T-H motif); the sequence is ERTLAAEFDTSRTTVRQALQ.

The protein resides in the cytoplasm. Its activity is regulated as follows. Binding to the target genes is abolished by GlcN6P, a central molecule in N-acetylglucosamine metabolism. Global regulator that is part of the nutrient-sensing system. In the absence of glucosamine 6-P (GlcN6P), represses the phosphotransferase system (PTS) specific for the uptake of N-acetylglucosamine (PTSNag), and genes involved in the metabolism of chitin, as well as several genes involved in development, thereby linking carbon availability to morphogenesis. Also regulates the expression of the ABC transporters DasABC and NgcEFG, which are involved in N,N'-diacetylchitobiose ((GlcNAc)2) uptake. Binds to the DNA consensus sequence 5'-ACTGGTCTAGACCACT-3'. In Streptomyces coelicolor (strain ATCC BAA-471 / A3(2) / M145), this protein is HTH-type transcriptional repressor DasR (dasR).